A 312-amino-acid polypeptide reads, in one-letter code: Dihydroorotate dehydrogenase B (NAD(+)), catalytic subunit (312 aa).

FMN contacts are provided by residues S21 and K45–A46. Substrate-binding positions include K45 and N69–L73. FMN is bound by residues N99 and N127. Position 127 (N127) interacts with substrate. Residue C130 is the Nucleophile of the active site. The FMN site is built by K165 and I191. N192–T193 is a binding site for substrate. Residues G217, G243–G244, and G265–T266 contribute to the FMN site.

Belongs to the dihydroorotate dehydrogenase family. Type 1 subfamily. As to quaternary structure, heterotetramer of 2 PyrK and 2 PyrD type B subunits. FMN is required as a cofactor.

The protein localises to the cytoplasm. It catalyses the reaction (S)-dihydroorotate + NAD(+) = orotate + NADH + H(+). Its pathway is pyrimidine metabolism; UMP biosynthesis via de novo pathway; orotate from (S)-dihydroorotate (NAD(+) route): step 1/1. Functionally, catalyzes the conversion of dihydroorotate to orotate with NAD(+) as electron acceptor. The sequence is that of Dihydroorotate dehydrogenase B (NAD(+)), catalytic subunit (pyrD) from Anoxybacillus flavithermus (strain DSM 21510 / WK1).